The chain runs to 290 residues: Glycine--tRNA ligase alpha subunit (290 aa).

It belongs to the class-II aminoacyl-tRNA synthetase family. Tetramer of two alpha and two beta subunits.

It localises to the cytoplasm. It catalyses the reaction tRNA(Gly) + glycine + ATP = glycyl-tRNA(Gly) + AMP + diphosphate. The polypeptide is Glycine--tRNA ligase alpha subunit (Nitratiruptor sp. (strain SB155-2)).